A 243-amino-acid polypeptide reads, in one-letter code: Fibroblast growth factor 12 (243 aa).

Disordered stretches follow at residues 1–39 (MAAA…DGRS) and 216–243 (IGEK…QDST). The Bipartite nuclear localization signal motif lies at 11–38 (RQKRQARESNSDRVSASKRRSSPSKDGR).

The protein belongs to the heparin-binding growth factors family. In terms of assembly, interacts with the C-terminal region of SCN9A. In terms of tissue distribution, brain, eye and testis; highly expressed in embryonic retina, olfactory epithelium, olfactory bulb, and in a segmental pattern of the body wall; in adult olfactory bulb, less in cerebellum, deep cerebellar nuclei, cortex and multiple midbrain structures.

Its subcellular location is the nucleus. Its function is as follows. Involved in nervous system development and function. Involved in the positive regulation of voltage-gated sodium channel activity. Promotes neuronal excitability by elevating the voltage dependence of neuronal sodium channel SCN8A fast inactivation. This Homo sapiens (Human) protein is Fibroblast growth factor 12 (FGF12).